The following is a 549-amino-acid chain: MPPKSSTTKHIFVTGGVASSLGKGLTASSLGMLLKARGLRVVMQKLDPYLNVDPGTMNPFQHGEVFVTNDGAETDLDIGHYERFLDRDLDGSANVTTGQVYSTVIAKERRGEYLGDTVQVIPHITNEIKHRIRRMATDEVDVVITEVGGTVGDIESLPFLETVRQVRHEVGRDNVFVVHISLLPYIGPSGELKTKPTQHSVAALRNIGIQPDAIVLRCDREVPTAIKRKISLMCDVDEAAVVACPDARSIYDIPKVIHTEGLDAYVVRRMDLPFRDVDWTTWDDLLDRVHNPEHEIVMALVGKYIDLPDAYLSVTEALRAGGFANKARVKIKWVTSDDCKTPAGARVQLGDVDAICIPGGFGERGVTGKVGAIQYARENGIPLLGLCLGLQCIVVEAARNLAGVADANSTEFDPATAHPVVSTMAEQLDIVAGEGDMGGTMRLGMYPAKLAEGSIVREVYDGKEYVEERHRHRYEVNNAYRAELEKKAGIVFSGTSPDGKLVEYVEYPRDVHPYLVATQAHPELRSRPTRPHPLFAGLVKAAVERKTSK.

An amidoligase domain region spans residues 1–272 (MPPKSSTTKH…DAYVVRRMDL (272 aa)). CTP is bound at residue Ser-19. Ser-19 lines the UTP pocket. Residues 20-25 (SLGKGL) and Asp-77 each bind ATP. Mg(2+) contacts are provided by Asp-77 and Glu-146. CTP is bound by residues 153–155 (DIE), 193–198 (KTKPTQ), and Lys-229. UTP is bound by residues 193-198 (KTKPTQ) and Lys-229. The Glutamine amidotransferase type-1 domain maps to 301–548 (VGKYIDLPDA…VKAAVERKTS (248 aa)). Residue Gly-360 coordinates L-glutamine. Residue Cys-387 is the Nucleophile; for glutamine hydrolysis of the active site. Residues 388-391 (LGLQ), Glu-411, and Arg-473 contribute to the L-glutamine site. Residues His-521 and Glu-523 contribute to the active site.

This sequence belongs to the CTP synthase family. As to quaternary structure, homotetramer.

The catalysed reaction is UTP + L-glutamine + ATP + H2O = CTP + L-glutamate + ADP + phosphate + 2 H(+). It carries out the reaction L-glutamine + H2O = L-glutamate + NH4(+). The enzyme catalyses UTP + NH4(+) + ATP = CTP + ADP + phosphate + 2 H(+). Its pathway is pyrimidine metabolism; CTP biosynthesis via de novo pathway; CTP from UDP: step 2/2. With respect to regulation, allosterically activated by GTP, when glutamine is the substrate; GTP has no effect on the reaction when ammonia is the substrate. The allosteric effector GTP functions by stabilizing the protein conformation that binds the tetrahedral intermediate(s) formed during glutamine hydrolysis. Inhibited by the product CTP, via allosteric rather than competitive inhibition. Functionally, catalyzes the ATP-dependent amination of UTP to CTP with either L-glutamine or ammonia as the source of nitrogen. Regulates intracellular CTP levels through interactions with the four ribonucleotide triphosphates. In Streptomyces coelicolor (strain ATCC BAA-471 / A3(2) / M145), this protein is CTP synthase.